A 141-amino-acid polypeptide reads, in one-letter code: Small ribosomal subunit protein uS19 (141 aa).

Belongs to the universal ribosomal protein uS19 family.

In terms of biological role, protein S19 forms a complex with S13 that binds strongly to the 16S ribosomal RNA. The polypeptide is Small ribosomal subunit protein uS19 (Halorubrum lacusprofundi (strain ATCC 49239 / DSM 5036 / JCM 8891 / ACAM 34)).